Consider the following 499-residue polypeptide: MEEFQVYLELARSRQYDFLYPLIFREYIYALAYDHGFNNSILVENLGYDNKSSLLIIKRLITRMYQQNHLIISANDSNKNPFWGCKKNLYSQLISEGFAVSVEIPFSLQLISSLEGAEIVKSYNLRSIHSIFPFFEEKFAYLTYVSDVQIPYPIHLEILVQTXXXXXXXXSCFHLLRLFLYEYWNWNSLITPKKWISTFSKSNPRLFLFLYNFYVCEYESIFLFLRNKSSYLRLTSSGVLFERINFYAKIEYFVEVFDKDFLSTLWFFKDSFIHYGRYQGKSILASKNTPFLMTKWKYYLIHLWQCHFYVWSQPGKIHINQLSEHSFDFLGYFSNVRLNPSVVRSQMLENSFLIENVMKKLDTIIPIIPLIRSLAKAKFCNVLGHPISKPVWADSADFDIIDLFLRRCRNLSHYYNGSSTKKSLYRIKHILRLSCIKTLARKHKSTVRVFLKSLGSELLEEFFTEEKEILSLIFPRASSTLQRLYRGRIWYLDIFYFHQ.

The protein belongs to the intron maturase 2 family. MatK subfamily.

Its subcellular location is the plastid. It localises to the chloroplast. Usually encoded in the trnK tRNA gene intron. Probably assists in splicing its own and other chloroplast group II introns. This Chamaecrista fasciculata (Showy partridge pea) protein is Maturase K.